Consider the following 225-residue polypeptide: Small ribosomal subunit protein uS3 (225 aa).

The KH type-2 domain maps to 39–109 (IYRFFNKFTR…ELKLNIEVVN (71 aa)).

Belongs to the universal ribosomal protein uS3 family. As to quaternary structure, part of the 30S ribosomal subunit. Forms a tight complex with proteins S10 and S14.

Its function is as follows. Binds the lower part of the 30S subunit head. Binds mRNA in the 70S ribosome, positioning it for translation. The polypeptide is Small ribosomal subunit protein uS3 (Mycoplasma mobile (strain ATCC 43663 / 163K / NCTC 11711) (Mesomycoplasma mobile)).